The chain runs to 207 residues: MEVDINGDSRSTLTTLPLPVAEGSSPGKAEAEKPRCSSTPCSPMRRTVSGYQILHMDSNYLVGFTTGEELLKLAQKCTGGEDSKGEAMPALRAKQLDTGLARSSRLYKTRSRYYQPYEIPAVNGRRRRRMPSSGDKCTKPLPYEPYKALHGPLPLCLLKGKRAHSKSLDYLNLDKMNIKEPADTEVLQYQLQHLTLRGDRVFARNNT.

Met-1 bears the N-acetylmethionine mark. Residues 1-41 (MEVDINGDSRSTLTTLPLPVAEGSSPGKAEAEKPRCSSTPC) form a disordered region. Phosphoserine is present on residues Ser-25 and Ser-167.

The protein belongs to the UNC119-binding protein family. In terms of assembly, interacts with UNC119 and UNC119B; interaction preferentially takes place when UNC119 and UNC119B are unliganded with myristoylated proteins. As to expression, highly expressed in photoreceptors.

The protein resides in the cytoplasm. It localises to the cell projection. Its subcellular location is the cilium. Regulates the macrophage function, by enhancing the resolution of inflammation and wound repair functions mediated by M2 macrophages. The regulation of macrophage function is, due at least in part, to its ability to inhibit glycolysis. May also play a role in trafficking of proteins via its interaction with UNC119 and UNC119B cargo adapters: may help the release of UNC119 and UNC119B cargo or the recycling of UNC119 and UNC119B. May play a role in ciliary membrane localization via its interaction with UNC119B and protein transport into photoreceptor cells. This chain is Macrophage immunometabolism regulator, found in Mus musculus (Mouse).